Reading from the N-terminus, the 447-residue chain is Na(+)-translocating NADH-quinone reductase subunit A (447 aa).

It belongs to the NqrA family. As to quaternary structure, composed of six subunits; NqrA, NqrB, NqrC, NqrD, NqrE and NqrF.

It carries out the reaction a ubiquinone + n Na(+)(in) + NADH + H(+) = a ubiquinol + n Na(+)(out) + NAD(+). Functionally, NQR complex catalyzes the reduction of ubiquinone-1 to ubiquinol by two successive reactions, coupled with the transport of Na(+) ions from the cytoplasm to the periplasm. NqrA to NqrE are probably involved in the second step, the conversion of ubisemiquinone to ubiquinol. The chain is Na(+)-translocating NADH-quinone reductase subunit A from Yersinia pestis bv. Antiqua (strain Angola).